A 254-amino-acid polypeptide reads, in one-letter code: Methyltransferase-like protein 23 (254 aa).

Residues 1 to 27 (MKSFIFRQNPRKQQQEQNNLVDYSDSD) form a disordered region. The span at 11–21 (RKQQQEQNNLV) shows a compositional bias: polar residues.

It belongs to the methyltransferase superfamily. METTL23 family.

Probable methyltransferase. This is Methyltransferase-like protein 23 from Dictyostelium discoideum (Social amoeba).